A 667-amino-acid chain; its full sequence is Probable endo-1,3(4)-beta-glucanase AFLA_105200 (667 aa).

The N-terminal stretch at 1 to 24 (MSSSSFVWTVGSIALSSLITPTIA) is a signal peptide. One can recognise a GH16 domain in the interval 25-288 (DGSGSRYQLT…WAGGVFGDSG (264 aa)). The N-linked (GlcNAc...) asparagine glycan is linked to N63. Catalysis depends on E144, which acts as the Nucleophile. The active-site Proton donor is E149. Composition is skewed to polar residues over residues 354-363 (VPSVTSTPIL) and 379-394 (ATSSAVPEPANPQTSV). 2 disordered regions span residues 354-427 (VPSV…ADAV) and 448-646 (GTIQ…AGAS). Low complexity-rich tracts occupy residues 395–427 (AGAETTAAPAPSPETTAAPASPSSDDSEGADAV), 448–483 (GTIQTIGGGETEVSPASSTVESAATPAAPTPTSQEP), and 574–622 (APTS…EATA). Residues 623-637 (PTETDSGASTGTNPE) show a composition bias toward polar residues. The GPI-anchor amidated glycine moiety is linked to residue G644. A propeptide spans 645–667 (ASKSVGISGLAGIVCGIAMAMLA) (removed in mature form).

Belongs to the glycosyl hydrolase 16 family.

The protein resides in the cell membrane. It catalyses the reaction Endohydrolysis of (1-&gt;3)- or (1-&gt;4)-linkages in beta-D-glucans when the glucose residue whose reducing group is involved in the linkage to be hydrolyzed is itself substituted at C-3.. Mixed-linked glucanase involved in the degradation of complex natural cellulosic substrates. This chain is Probable endo-1,3(4)-beta-glucanase AFLA_105200, found in Aspergillus flavus (strain ATCC 200026 / FGSC A1120 / IAM 13836 / NRRL 3357 / JCM 12722 / SRRC 167).